Consider the following 251-residue polypeptide: tRNA-cytidine(32) 2-sulfurtransferase 1 (251 aa).

Residues 33–38 (SGGKDS) carry the PP-loop motif motif. [4Fe-4S] cluster contacts are provided by Cys-108, Cys-111, and Cys-199.

It belongs to the TtcA family. Homodimer. The cofactor is Mg(2+). Requires [4Fe-4S] cluster as cofactor.

The protein resides in the cytoplasm. It carries out the reaction cytidine(32) in tRNA + S-sulfanyl-L-cysteinyl-[cysteine desulfurase] + AH2 + ATP = 2-thiocytidine(32) in tRNA + L-cysteinyl-[cysteine desulfurase] + A + AMP + diphosphate + H(+). The protein operates within tRNA modification. Functionally, catalyzes the ATP-dependent 2-thiolation of cytidine in position 32 of tRNA, to form 2-thiocytidine (s(2)C32). The sulfur atoms are provided by the cysteine/cysteine desulfurase (IscS) system. The protein is tRNA-cytidine(32) 2-sulfurtransferase 1 of Francisella tularensis subsp. holarctica (strain FTNF002-00 / FTA).